Consider the following 434-residue polypeptide: Pectate lyase (434 aa).

An N-terminal signal peptide occupies residues 1-22 (MKAAQFFLYSLLFFASAALSSA). N-linked (GlcNAc...) asparagine glycosylation is found at Asn-68 and Asn-97. Positions 232, 256, and 260 each coordinate Ca(2+). Residue Arg-312 is part of the active site.

This sequence belongs to the polysaccharide lyase 1 family. Requires Ca(2+) as cofactor.

The catalysed reaction is Eliminative cleavage of (1-&gt;4)-alpha-D-galacturonan to give oligosaccharides with 4-deoxy-alpha-D-galact-4-enuronosyl groups at their non-reducing ends.. The protein operates within glycan metabolism; pectin degradation; 2-dehydro-3-deoxy-D-gluconate from pectin: step 2/5. The sequence is that of Pectate lyase from Lilium longiflorum (Trumpet lily).